A 219-amino-acid chain; its full sequence is Predicted GPI-anchored protein 6 (219 aa).

An N-terminal signal peptide occupies residues 1 to 19 (MQFQTLLVVAGSLVASTLA). 3 N-linked (GlcNAc...) asparagine glycosylation sites follow: asparagine 21, asparagine 173, and asparagine 188. Glycine 194 carries the GPI-anchor amidated glycine lipid modification. A propeptide spans 195 to 219 (GAVGGASNQITVGFAAIAGLAAILL) (removed in mature form).

Belongs to the flocculin family. In terms of processing, the GPI-anchor is attached to the protein in the endoplasmic reticulum and serves to target the protein to the cell surface. There, the glucosamine-inositol phospholipid moiety is cleaved off and the GPI-modified mannoprotein is covalently attached via its lipidless GPI glycan remnant to the 1,6-beta-glucan of the outer cell wall layer.

Its subcellular location is the secreted. The protein localises to the cell wall. It is found in the membrane. Its function is as follows. Probable cell wall protein that participates directly in adhesive cell-cell interactions. The protein is Predicted GPI-anchored protein 6 (PGA6) of Candida albicans (strain SC5314 / ATCC MYA-2876) (Yeast).